The sequence spans 301 residues: GTPase Era (301 aa).

An Era-type G domain is found at 7 to 175 (YCGFIAIVGR…AAIVRKHLPE (169 aa)). The segment at 15 to 22 (GRPNVGKS) is G1. 15–22 (GRPNVGKS) provides a ligand contact to GTP. The interval 41–45 (QTTRH) is G2. The G3 stretch occupies residues 62–65 (DTPG). GTP is bound by residues 62–66 (DTPGL) and 124–127 (NKVD). A G4 region spans residues 124–127 (NKVD). A G5 region spans residues 154–156 (ISA). The region spanning 206–283 (LGAELPYSVT…HLELWVKVKS (78 aa)) is the KH type-2 domain.

This sequence belongs to the TRAFAC class TrmE-Era-EngA-EngB-Septin-like GTPase superfamily. Era GTPase family. Monomer.

It localises to the cytoplasm. Its subcellular location is the cell inner membrane. Functionally, an essential GTPase that binds both GDP and GTP, with rapid nucleotide exchange. Plays a role in 16S rRNA processing and 30S ribosomal subunit biogenesis and possibly also in cell cycle regulation and energy metabolism. The polypeptide is GTPase Era (Escherichia fergusonii (strain ATCC 35469 / DSM 13698 / CCUG 18766 / IAM 14443 / JCM 21226 / LMG 7866 / NBRC 102419 / NCTC 12128 / CDC 0568-73)).